The following is a 368-amino-acid chain: Histidinol-phosphate aminotransferase (368 aa).

Lys-223 is subject to N6-(pyridoxal phosphate)lysine.

It belongs to the class-II pyridoxal-phosphate-dependent aminotransferase family. Histidinol-phosphate aminotransferase subfamily. As to quaternary structure, homodimer. Pyridoxal 5'-phosphate serves as cofactor.

The enzyme catalyses L-histidinol phosphate + 2-oxoglutarate = 3-(imidazol-4-yl)-2-oxopropyl phosphate + L-glutamate. Its pathway is amino-acid biosynthesis; L-histidine biosynthesis; L-histidine from 5-phospho-alpha-D-ribose 1-diphosphate: step 7/9. This Sinorhizobium fredii (strain NBRC 101917 / NGR234) protein is Histidinol-phosphate aminotransferase (hisC).